A 181-amino-acid chain; its full sequence is Cytochrome P450 monooxygenase dtpC (181 aa).

Cys125 contacts heme.

Belongs to the cytochrome P450 family. Requires heme as cofactor.

The protein operates within alkaloid biosynthesis. It functions in the pathway secondary metabolite biosynthesis. Cytochrome P450 monooxygenase; part of the gene cluster that mediates the biosynthesis of the dimeric diketopiperazine alkaloid ditryptophenaline. The nonribosomal peptide synthase dtpA accepts L-tryptophan and L-phenylalanine as its substrates and forms the phenylalanyl-tryptophanyl cyclic dipeptide product cyclophenylalanyltryptophenyl. The N-methyltransferase dtpB is responsible for the N-methylation of cyclophenylalanyltryptophenyl to yield cyclo-N-methylphenylalanyltryptophenyl. The cytochrome P450 monooxygenase is responsible not only for pyrroloindole ring formation but also for concurrent dimerization of N-methylphenylalanyltryptophanyl diketopiperazine monomers into a homodimeric product. This chain is Cytochrome P450 monooxygenase dtpC, found in Aspergillus flavus (strain ATCC 200026 / FGSC A1120 / IAM 13836 / NRRL 3357 / JCM 12722 / SRRC 167).